The primary structure comprises 375 residues: Probable butyrate kinase 2 (375 aa).

It belongs to the acetokinase family.

It localises to the cytoplasm. The catalysed reaction is butanoate + ATP = butanoyl phosphate + ADP. This Thermotoga maritima (strain ATCC 43589 / DSM 3109 / JCM 10099 / NBRC 100826 / MSB8) protein is Probable butyrate kinase 2.